The following is a 562-amino-acid chain: Arginine--tRNA ligase (562 aa).

The 'HIGH' region signature appears at 121–131 (PNIAKPMGMGH).

This sequence belongs to the class-I aminoacyl-tRNA synthetase family. As to quaternary structure, monomer.

It is found in the cytoplasm. The enzyme catalyses tRNA(Arg) + L-arginine + ATP = L-arginyl-tRNA(Arg) + AMP + diphosphate. The chain is Arginine--tRNA ligase from Limosilactobacillus reuteri (strain DSM 20016) (Lactobacillus reuteri).